We begin with the raw amino-acid sequence, 358 residues long: DnaJ homolog subfamily B member 11 (358 aa).

Positions Met-1–Ala-22 are cleaved as a signal peptide. The J domain maps to Asp-25 to Gly-90. At Thr-188 the chain carries Phosphothreonine. N-linked (GlcNAc...) asparagine glycosylation occurs at Asn-261.

In terms of assembly, part of a large chaperone multiprotein complex comprising DNAJB11, HSP90B1, HSPA5, HYOU, PDIA2, PDIA4, PDIA6, PPIB, SDF2L1, UGGT1 and very small amounts of ERP29, but not, or at very low levels, CALR nor CANX. Binds to denatured substrates in an ATP-independent manner. Interacts via the J domain with HSPA5 in an ATP-dependent manner. In terms of processing, contains high-mannose Endo H-sensitive carbohydrates. Post-translationally, cys-169, Cys-171, Cys-193 and Cys-196 form intramolecular disulfide bonds. The preferential partner for each Cys is not known.

The protein localises to the endoplasmic reticulum lumen. Functionally, as a co-chaperone for HSPA5 it is required for proper folding, trafficking or degradation of proteins. Binds directly to both unfolded proteins that are substrates for ERAD and nascent unfolded peptide chains, but dissociates from the HSPA5-unfolded protein complex before folding is completed. May help recruiting HSPA5 and other chaperones to the substrate. Stimulates HSPA5 ATPase activity. It is necessary for maturation and correct trafficking of PKD1. This Rattus norvegicus (Rat) protein is DnaJ homolog subfamily B member 11 (Dnajb11).